The primary structure comprises 91 residues: Large ribosomal subunit protein bL27 (91 aa).

Positions 1–22 are disordered; that stretch reads MAHKKAGGSSRNGRDSAGRRLG.

It belongs to the bacterial ribosomal protein bL27 family.

The protein is Large ribosomal subunit protein bL27 of Methylocella silvestris (strain DSM 15510 / CIP 108128 / LMG 27833 / NCIMB 13906 / BL2).